The primary structure comprises 1288 residues: Vacuolating cytotoxin autotransporter (1288 aa).

Residues 1–33 form the signal peptide; that stretch reads MEIQQTHRKINRPLVSLVLAGALISAIPQESHA. The disordered stretch occupies residues 326 to 377; sequence PPEGGYKDKPNSTTSQSGTKNDKKEISQNNNSNTEVINPPNNTQKTETEPTQ. Residues 352–376 show a composition bias toward polar residues; that stretch reads SQNNNSNTEVINPPNNTQKTETEPT. The 274-residue stretch at 1015–1288 folds into the Autotransporter domain; sequence KYEKPTNVWA…ASNLGMRYSF (274 aa).

The protein localises to the periplasm. It localises to the secreted. Its subcellular location is the cell surface. The protein resides in the cell outer membrane. Functionally, induces vacuolation of eukaryotic cells. Causes ulceration and gastric lesions. The protein is Vacuolating cytotoxin autotransporter (vacA) of Helicobacter pylori (strain J99 / ATCC 700824) (Campylobacter pylori J99).